Here is a 141-residue protein sequence, read N- to C-terminus: Hemoglobin subunit alpha-1/2/3 (141 aa).

In terms of domain architecture, Globin spans 1-141 (VLSPADKTNV…VGTVLTSKYR (141 aa)). Ser-3 bears the Phosphoserine mark. Lys-7 bears the N6-succinyllysine mark. Phosphothreonine is present on Thr-8. Lys-11 carries the post-translational modification N6-succinyllysine. N6-acetyllysine; alternate is present on Lys-16. Position 16 is an N6-succinyllysine; alternate (Lys-16). The residue at position 24 (Tyr-24) is a Phosphotyrosine. Phosphoserine is present on Ser-35. N6-succinyllysine is present on Lys-40. Position 49 is a phosphoserine (Ser-49). His-58 serves as a coordination point for O2. His-87 provides a ligand contact to heme b. Ser-102 is subject to Phosphoserine. At Thr-108 the chain carries Phosphothreonine. Ser-124 and Ser-131 each carry phosphoserine. Phosphothreonine occurs at positions 134 and 137. Ser-138 carries the phosphoserine modification.

The protein belongs to the globin family. As to quaternary structure, heterotetramer of two alpha chains and two beta chains. In terms of tissue distribution, red blood cells.

Involved in oxygen transport from the lung to the various peripheral tissues. In Macaca nemestrina (Pig-tailed macaque), this protein is Hemoglobin subunit alpha-1/2/3.